Here is a 78-residue protein sequence, read N- to C-terminus: Small ribosomal subunit protein bS18 (78 aa).

Belongs to the bacterial ribosomal protein bS18 family. As to quaternary structure, part of the 30S ribosomal subunit. Forms a tight heterodimer with protein bS6.

Its function is as follows. Binds as a heterodimer with protein bS6 to the central domain of the 16S rRNA, where it helps stabilize the platform of the 30S subunit. The protein is Small ribosomal subunit protein bS18 of Limosilactobacillus fermentum (strain NBRC 3956 / LMG 18251) (Lactobacillus fermentum).